An 83-amino-acid chain; its full sequence is Small integral membrane protein 10 (83 aa).

Residues Phe-64 to Tyr-82 traverse the membrane as a helical segment.

Its subcellular location is the membrane. The protein is Small integral membrane protein 10 (SMIM10) of Homo sapiens (Human).